Here is a 267-residue protein sequence, read N- to C-terminus: NAD kinase 2 (267 aa).

The active-site Proton acceptor is the Asp-52. Residues 52–53 (DA), 124–125 (NE), Arg-151, Asp-153, 164–169 (TAYNKS), and Ala-188 contribute to the NAD(+) site.

It belongs to the NAD kinase family. A divalent metal cation is required as a cofactor.

The protein resides in the cytoplasm. The enzyme catalyses NAD(+) + ATP = ADP + NADP(+) + H(+). In terms of biological role, involved in the regulation of the intracellular balance of NAD and NADP, and is a key enzyme in the biosynthesis of NADP. Catalyzes specifically the phosphorylation on 2'-hydroxyl of the adenosine moiety of NAD to yield NADP. In Bacillus cereus (strain ATCC 14579 / DSM 31 / CCUG 7414 / JCM 2152 / NBRC 15305 / NCIMB 9373 / NCTC 2599 / NRRL B-3711), this protein is NAD kinase 2.